Reading from the N-terminus, the 155-residue chain is Ribonuclease H (155 aa).

The 142-residue stretch at 1 to 142 (MLKQVEIFTD…CDELARAAAM (142 aa)) folds into the RNase H type-1 domain. Mg(2+)-binding residues include Asp10, Glu48, Asp70, and Asp134.

It belongs to the RNase H family. Monomer. Mg(2+) is required as a cofactor.

It localises to the cytoplasm. The enzyme catalyses Endonucleolytic cleavage to 5'-phosphomonoester.. Its function is as follows. Endonuclease that specifically degrades the RNA of RNA-DNA hybrids. The protein is Ribonuclease H of Salmonella paratyphi A (strain AKU_12601).